Here is a 503-residue protein sequence, read N- to C-terminus: MHYVDPNQSGSKIHFKDQYENFIGGQWVAPVKGVYFDNISPVDGKSFTRIPRSSAEDIELALDAAHKAKKEWNKSSPTTRSNLLLKIADRMEANLEMLAVAETWDNGKPVRETLAADIPLAIDHFRYFAGCIRAQEGGISEIDEDTIAYHFHEPLGVVGQIIPWNFPILMAAWKLAPALAAGNCVVIKPAEQTPVGILLVAELIQDLLPAGVLNIVNGYGAEVGRPLATSPRIAKIAFTGSTQVGQLIMQYATENIIPVTLELGGKSPNVFFADVMDHDDDFLDKTLEGFAMFALNQGEVCTCPSRALIQESIADQFMEKAIERVKRIKLGHPLDTDTMVGAQASLEQQEKILRCIDTGRQEGAEVLLGGHGRQEVGNGYYIEPTIFKGHNNMQVFQEEIFGPVLSVTTFKDFDEAIQIANDTMYGLGAGVWSRSTHTAYRAGRAIEAGRVWTNCYHIYPAHAAFGGYKKSGVGRENHKMMLDHYQQTKNLLVSYSTKAMGFF.

Residue Gly-218–Gly-224 participates in NAD(+) binding. Catalysis depends on residues Glu-262 and Cys-301.

It belongs to the aldehyde dehydrogenase family. In terms of assembly, homotetramer.

It catalyses the reaction a long-chain fatty aldehyde + NAD(+) + H2O = a long-chain fatty acid + NADH + 2 H(+). With respect to regulation, completely inhibited by p-chloromercuribenzoate and N-ethylmaleimide. Strongly inhibited by iodoacetate. Inhibited by Pb(2+), Fe(3+), Ag(+) and Hg(2+) and partially inhibited by several other metal ions Mn(2+), Zn(2+) and Cu(2+). Aldehyde dehydrogenase that shows activity toward n-alkanals (C(4) to C(14)), with a preference for longer carbon chains. The best substrate is tetradecanal. The sequence is that of Long-chain-aldehyde dehydrogenase (ald1) from Acinetobacter sp.